Reading from the N-terminus, the 369-residue chain is tRNA pseudouridine synthase D (369 aa).

Asp-80 (nucleophile) is an active-site residue. The TRUD domain occupies 156–318 (GIPNWFGEQR…LKQERRALRL (163 aa)).

It belongs to the pseudouridine synthase TruD family.

It carries out the reaction uridine(13) in tRNA = pseudouridine(13) in tRNA. Functionally, responsible for synthesis of pseudouridine from uracil-13 in transfer RNAs. The protein is tRNA pseudouridine synthase D of Xanthomonas euvesicatoria pv. vesicatoria (strain 85-10) (Xanthomonas campestris pv. vesicatoria).